The sequence spans 548 residues: MLERRCRGPTAMGPAHPWLFSGPSQESSQPNRGLRYQGKSVAQPGGPAPVKVHRCAHCRKRFPGWVALWLHTRRCQARLPLPCHECNQRFRHAPFLALHLQVHASAVPDLGFICHLCGHSFRGWVALVLHLRAHSASKRPITCPECNKRFWRQKQLRAHLRRCQPPAPEARPFICGNCGRSFAQWDQLVVHKRVHVAEALEEAAAKALGPRPRGRPSVTAPRPGGDAVDRPFQCACCGKRFRHKPNLIAHRRVHTGERPHQCPECGKRFTNKPYLTSHRRIHTGEKPYPCTECGRRFRHKPNLLSHSKIHKRSEVSAQAASHTGSHLIAAEPMAQPALGVPLGSLRTPAEAPASLHSCTDCGRSFRLERFLRLHQRQHTGERPFTCTECGKNFGKKTHLVAHSRVHSGERPFACEECGRRFSQGSHLAAHRRDHAPERPFVCPDCGKAFRHKPYLAAHRRIHTGEKPYVCPDCGKAFSQKSNLVSHRRIHTGERPYACPDCDRSFSQKSNLITHRKSHIRDGAFCCAICGQTFDDEDRLLMHQKKHDA.

The disordered stretch occupies residues 1-47; it reads MLERRCRGPTAMGPAHPWLFSGPSQESSQPNRGLRYQGKSVAQPGGP. Residues 22–31 show a composition bias toward polar residues; the sequence is GPSQESSQPN. Ser27 carries the phosphoserine modification. Lys39 carries the post-translational modification N6-acetyllysine. The C2H2-type 1; atypical zinc-finger motif lies at 53-75; that stretch reads HRCAHCRKRFPGWVALWLHTRRC. C2H2-type zinc fingers lie at residues 81–103 and 112–134; these read LPCH…LQVH and FICH…LRAH. Residues 141–163 form a C2H2-type 4; atypical zinc finger; the sequence is ITCPECNKRFWRQKQLRAHLRRC. 11 consecutive C2H2-type zinc fingers follow at residues 173–195, 232–254, 260–282, 288–310, 356–378, 384–406, 412–434, 440–462, 468–490, 496–518, and 524–546; these read FICG…KRVH, FQCA…RRVH, HQCP…RRIH, YPCT…SKIH, HSCT…QRQH, FTCT…SRVH, FACE…RRDH, FVCP…RRIH, YVCP…RRIH, YACP…RKSH, and FCCA…QKKH. Residue Lys272 is modified to N6-acetyllysine.

In terms of assembly, homodimers and homomultimers. Found in a complex with RIP60 and RIP100. Expressed in the liver and in subcutaneous and visceral adipose tissue.

The protein localises to the nucleus. The protein resides in the cytoplasm. Its subcellular location is the cytosol. Its function is as follows. Sequence-specific double-stranded DNA-binding protein. Binds ATT-rich and T-rich DNA sequences and facilitates DNA bending. May regulate the expression of genes involved in cellular fatty acid import, including SCARB1/CD36, and genes involved in lipid droplet formation. May regulate the expression of LCN2, and thereby influence iron metabolism and apoptosis-related pathways. May regulate the expression of genes involved in glucose transport. The polypeptide is DNA-binding protein REPIN1 (Repin1) (Rattus norvegicus (Rat)).